A 184-amino-acid polypeptide reads, in one-letter code: MKNQKKLIILTGPSGVGKGTVIKEILGKDKNIWLSISATTREPREGEQEGENYYFLKQEKFKEMIEKNLFLEWAQFAGNYYGTPLSSVNEKITKGFTVLLEIEVEGAKQIKEKFPESLSIFLLPPDKAELERRIRNRGTEKEEAIKKRLLRASYEISASNQFDFELTNHNVDETAKRIIKLIQT.

The 179-residue stretch at 5–183 (KKLIILTGPS…TAKRIIKLIQ (179 aa)) folds into the Guanylate kinase-like domain. 12–19 (GPSGVGKG) serves as a coordination point for ATP.

Belongs to the guanylate kinase family.

It localises to the cytoplasm. The catalysed reaction is GMP + ATP = GDP + ADP. Its function is as follows. Essential for recycling GMP and indirectly, cGMP. This is Guanylate kinase from Prochlorococcus marinus (strain MIT 9312).